Consider the following 69-residue polypeptide: Probable Sec-independent protein translocase protein TatE (69 aa).

Residues 1–21 (MEGISIAKLLVIGALIVLLFG) traverse the membrane as a helical segment. Residues 45–69 (DDQPAAKSSAQDEHPAAISETRPKE) are disordered. Residues 54-69 (AQDEHPAAISETRPKE) show a composition bias toward basic and acidic residues.

This sequence belongs to the TatA/E family. TatE subfamily.

It localises to the cell inner membrane. Its function is as follows. Part of the twin-arginine translocation (Tat) system that transports large folded proteins containing a characteristic twin-arginine motif in their signal peptide across membranes. TatE shares overlapping functions with TatA. The polypeptide is Probable Sec-independent protein translocase protein TatE (Dickeya chrysanthemi (strain Ech1591) (Dickeya zeae (strain Ech1591))).